The following is a 268-amino-acid chain: uncharacterized protein (268 aa).

Positions 15–77 (NQALIRGLRL…NAAGSYRLTI (63 aa)) constitute an HTH iclR-type domain. Positions 37-56 (LAKLAELANLNKSTAHRLLQ) form a DNA-binding region, H-T-H motif. The region spanning 92–265 (IIHVASPYLE…AEQISLELGY (174 aa)) is the IclR-ED domain.

This is an uncharacterized protein from Haemophilus influenzae (strain ATCC 51907 / DSM 11121 / KW20 / Rd).